Consider the following 302-residue polypeptide: Vacuolar protein sorting-associated protein 26A (302 aa).

Belongs to the VPS26 family. In terms of assembly, component of the retromer complex which consists of VPS29 (MAG1), VPS26 (VPS26A or VPS26B), VPS35 (VPS35A or VPS35B or VPS35C), VPS5/17 (SNX1 or SNX2A or SNX2B). Component of a retromer subcomplex consisting of VPS29 (MAG1), VPS26 (VPS26A or VPS26B), VPS35 (VPS35A or VPS35B or VPS35C).

Its subcellular location is the cytoplasm. It localises to the endosome membrane. The protein localises to the prevacuolar compartment membrane. The protein resides in the golgi apparatus. It is found in the trans-Golgi network membrane. Plays a role in vesicular protein sorting. Component of the membrane-associated retromer complex which is essential in endosome-to-Golgi retrograde transport. The VPS29-VPS26-VPS35 subcomplex may be involved in recycling of specific cargos from endosome to the plasma membrane. The polypeptide is Vacuolar protein sorting-associated protein 26A (VPS26A) (Arabidopsis thaliana (Mouse-ear cress)).